A 248-amino-acid chain; its full sequence is Probable transcriptional regulatory protein BH14810 (248 aa).

This sequence belongs to the TACO1 family.

It localises to the cytoplasm. This is Probable transcriptional regulatory protein BH14810 from Bartonella henselae (strain ATCC 49882 / DSM 28221 / CCUG 30454 / Houston 1) (Rochalimaea henselae).